Consider the following 323-residue polypeptide: Melanocortin receptor 3 (323 aa).

At Met-1–Gln-37 the chain is on the extracellular side. N-linked (GlcNAc...) asparagine glycosylation is found at Asn-2, Asn-16, and Asn-28. Residues Val-38 to Val-63 traverse the membrane as a helical segment. At Val-64–Phe-75 the chain is on the cytoplasmic side. Residues Phe-76 to Val-100 form a helical membrane-spanning segment. The Extracellular segment spans residues Ile-101–Asn-118. The chain crosses the membrane as a helical span at residues Ile-119–Ile-140. Residues Asp-141 to Lys-160 are Cytoplasmic-facing. A helical transmembrane segment spans residues Ala-161–Ile-181. The Extracellular portion of the chain corresponds to Tyr-182 to Lys-186. The helical transmembrane segment at Met-187 to Met-210 threads the bilayer. At Phe-211–Thr-245 the chain is on the cytoplasmic side. A helical transmembrane segment spans residues Ile-246–Cys-268. The Extracellular segment spans residues Pro-269 to Tyr-277. The helical transmembrane segment at Thr-278–Phe-301 threads the bilayer. The Cytoplasmic segment spans residues Arg-302 to Gly-323. Cys-315 carries the S-palmitoyl cysteine lipid modification.

The protein belongs to the G-protein coupled receptor 1 family. As to expression, brain.

It localises to the cell membrane. Its function is as follows. Receptor for MSH (alpha, beta and gamma) and ACTH. This receptor is mediated by G proteins which activate adenylate cyclase. Required for expression of anticipatory patterns of activity and wakefulness during periods of limited nutrient availability and for the normal regulation of circadian clock activity in the brain. The protein is Melanocortin receptor 3 (Mc3r) of Mus musculus (Mouse).